A 981-amino-acid polypeptide reads, in one-letter code: Amidohydrolase tasK (981 aa).

The tract at residues 1–36 is disordered; it reads MDDQKGPLPPYTPTATAPPPASMRQRRPPGRRRALR. Pro residues predominate over residues 7–21; that stretch reads PLPPYTPTATAPPPA. Basic residues predominate over residues 24-36; sequence RQRRPPGRRRALR. A helical membrane pass occupies residues 40-57; the sequence is TVRVLALACLAFVVLAQW. The tract at residues 86–107 is disordered; the sequence is LRVRPQDPAGPGRSKNDRYLDG. Fe(2+) contacts are provided by H187 and H189. Zn(2+)-binding residues include H187 and H189. N407 carries an N-linked (GlcNAc...) asparagine glycan. The segment at 819–838 is disordered; that stretch reads KKQQKQQQQQQQQQQQQHGT. Over residues 823–835 the composition is skewed to low complexity; that stretch reads KQQQQQQQQQQQQ. N891 carries an N-linked (GlcNAc...) asparagine glycan.

The protein belongs to the metallo-dependent hydrolases superfamily. Fe(2+) serves as cofactor. Requires Mn(2+) as cofactor. It depends on Zn(2+) as a cofactor.

The protein localises to the membrane. Amidohydrolase; part of the gene cluster that mediates the biosynthesis of the tetramic acids Sch210971 and Sch210972, potential anti-HIV fungal natural product that contain a decalin core. The PKS module of tasS together with the enoylreductase tasC catalyze the formation of the polyketide unit which is then conjugated to 4-hydroxyl-4-methyl glutamate (HMG) by the condensation domain of the tasS NRPS module. One unique structural feature of Sch210971 and Sch210972 is the tetramic acid motif proposed to be derived from the non-proteinogenic amino acid HMG, by a Dieckmann-type condensation catalyzed by the reductase domain of tasS. The aldolase tasA catalyzes the aldol condensation of 2 molecules of pyruvic acid to yield the intermediate 4-hydroxyl-4-methyl-2-oxoglutarate (HMOG), which can then be stereoselectively transaminated, may be by tasG, to form HMG. The Diels-Alderase tas3 then uses the Dieckmann product of tasS as substrate and catalyzes the Diels-Alder cycloaddition to form the decalin ring of Sch210971 and Sch210972. This Hapsidospora irregularis protein is Amidohydrolase tasK.